Here is a 494-residue protein sequence, read N- to C-terminus: Cobyric acid synthase (494 aa).

Residues 248 to 445 form the GATase cobBQ-type domain; it reads ELEIAVLKLP…LHGIFDNGPW (198 aa). Cys-329 acts as the Nucleophile in catalysis. His-437 is an active-site residue.

Belongs to the CobB/CobQ family. CobQ subfamily.

It functions in the pathway cofactor biosynthesis; adenosylcobalamin biosynthesis. Its function is as follows. Catalyzes amidations at positions B, D, E, and G on adenosylcobyrinic A,C-diamide. NH(2) groups are provided by glutamine, and one molecule of ATP is hydrogenolyzed for each amidation. This is Cobyric acid synthase from Synechococcus sp. (strain WH7803).